Here is a 404-residue protein sequence, read N- to C-terminus: V-set and immunoglobulin domain-containing protein 1 (404 aa).

An N-terminal signal peptide occupies residues 1–22 (MMVFAFWKVFLILNCLAGQVNM). In terms of domain architecture, Ig-like V-type spans 23–133 (VQVTIPDTFV…DFFGKNQGIL (111 aa)). Residues 23–233 (VQVTIPDTFV…EIDLTSSDPE (211 aa)) are Extracellular-facing. The N-linked (GlcNAc...) asparagine glycan is linked to Asn-39. 2 cysteine pairs are disulfide-bonded: Cys-44-Cys-117 and Cys-162-Cys-212. The 88-residue stretch at 141 to 228 (PSKPFCSIQG…GNSSCEIDLT (88 aa)) folds into the Ig-like C2-type domain. N-linked (GlcNAc...) asparagine glycosylation is found at Asn-201 and Asn-220. Residues 234–254 (VGIIIGALVGALTGAAIIICV) form a helical membrane-spanning segment. The Cytoplasmic portion of the chain corresponds to 255 to 404 (VYFARNKVKS…REEEKETVKA (150 aa)). Disordered stretches follow at residues 266 to 285 (QKNL…HHSR) and 298 to 404 (EGTL…TVKA). A phosphoserine mark is found at Ser-271 and Ser-272. The segment covering 301–314 (LPSSIHASHNTEPT) has biased composition (polar residues). Residues 357–383 (MELEPETEPEPEPEPEPQPELESELEP) show a composition bias toward acidic residues. Residues 393–404 (PMREEEKETVKA) are compositionally biased toward basic and acidic residues.

The protein localises to the membrane. This Rattus norvegicus (Rat) protein is V-set and immunoglobulin domain-containing protein 1 (Vsig1).